A 106-amino-acid polypeptide reads, in one-letter code: UPF0060 membrane protein RL1530 (106 aa).

4 helical membrane passes run 4 to 24 (IIFAFAALFEIAGCFAFWAWL), 30 to 50 (VWWLAPGMVSLALFAWILTLV), 58 to 78 (TFAAYGGIYILASLLWLWLVE), and 86 to 106 (DIGGALICLAGASLILFAPRG).

The protein belongs to the UPF0060 family.

The protein localises to the cell inner membrane. The polypeptide is UPF0060 membrane protein RL1530 (Rhizobium johnstonii (strain DSM 114642 / LMG 32736 / 3841) (Rhizobium leguminosarum bv. viciae)).